The primary structure comprises 338 residues: MSLQRRTTLTKYLIEQQRENNNLPADLRLLIEVVARACKAISYHVSKGALGDALGTAGSENVQGEVQKKLDILSNEILLEANEWGGNLAGMASEEMEQFFPIPANYPKGEYLLVFDPLDGSSNIDVNVSIGTIFSVLRCPDGQQPTEQSFLQKGTQQVAAGYAVYGPQTVLVLTTGNGVNCFTLDRELGSWVLTQSDMRIPVETREYAINASNQRHWYEPVQQYIGELNAGKDGPRQADFNMRWIASMVADVHRILNRGGIFMYPADKRDPSKPGKLRLMYEANPMSFIVEQAGGAATNGEKRILDIQPKSLHERVAVFLGSKNEVDRVTRYHLEKKS.

Glu-94, Asp-116, Leu-118, and Asp-119 together coordinate Mg(2+). Substrate is bound by residues 119–122 (DGSS), Asn-210, and Lys-276. Residue Glu-282 participates in Mg(2+) binding.

Belongs to the FBPase class 1 family. As to quaternary structure, homotetramer. The cofactor is Mg(2+).

It localises to the cytoplasm. It catalyses the reaction beta-D-fructose 1,6-bisphosphate + H2O = beta-D-fructose 6-phosphate + phosphate. Its pathway is carbohydrate biosynthesis; gluconeogenesis. This is Fructose-1,6-bisphosphatase class 1 1 from Paraburkholderia phymatum (strain DSM 17167 / CIP 108236 / LMG 21445 / STM815) (Burkholderia phymatum).